The primary structure comprises 381 residues: Pyrimidine monooxygenase RutA (381 aa).

Residues 66 to 67, N132, E141, 157 to 158, and S207 each bind FMN; these read IK and RY.

The protein belongs to the NtaA/SnaA/DszA monooxygenase family. RutA subfamily.

It catalyses the reaction uracil + FMNH2 + NADH + O2 = (Z)-3-ureidoacrylate + FMN + NAD(+) + H2O + H(+). It carries out the reaction thymine + FMNH2 + NADH + O2 = (Z)-2-methylureidoacrylate + FMN + NAD(+) + H2O + H(+). Its function is as follows. Catalyzes the pyrimidine ring opening between N-3 and C-4 by an unusual flavin hydroperoxide-catalyzed mechanism, adding oxygen atoms in the process to yield ureidoacrylate peracid, that immediately reacts with FMN forming ureidoacrylate and FMN-N(5)-oxide. The FMN-N(5)-oxide reacts spontaneously with NADH to produce FMN. Requires the flavin reductase RutF to regenerate FMN in vivo. The polypeptide is Pyrimidine monooxygenase RutA (Methylobacterium radiotolerans (strain ATCC 27329 / DSM 1819 / JCM 2831 / NBRC 15690 / NCIMB 10815 / 0-1)).